The sequence spans 504 residues: Tegument protein VP16 homolog (504 aa).

Disordered stretches follow at residues 354–381 (EAGG…RLQR), 395–421 (ATPR…QGRR), and 435–486 (RSGP…ANPF). The span at 361-378 (RSGSTRTRGRAARSTTGR) shows a compositional bias: low complexity. The span at 447-460 (PVRSGLGLSRARGS) shows a compositional bias: low complexity.

The protein belongs to the herpesviridae tegument protein VP16 protein family. As to quaternary structure, associates with the VP16-induced complex; binding to host HCFC1 activates VP16 for association with the octamer motif-binding host protein POU2F1, to form a multiprotein-DNA complex responsible for activating transcription of the viral immediate early genes.

It localises to the virion tegument. The protein resides in the host nucleus. Functionally, transcriptional activator of immediate-early (IE) gene products (alpha genes). Acts as a key activator of lytic infection by initiating the lytic program through the assembly of the transcriptional regulatory VP16-induced complex composed of VP16 and two cellular factors, HCFC1 and POU2F1. VP16-induced complex represents a regulatory switch: when it is on, it promotes IE-gene expression and thus lytic infection, and when it is off, it limits IE-gene transcription favoring latent infection. May play a role in the aggregation of tegument proteins around nucleocapsids during virus morphogenesis. The chain is Tegument protein VP16 homolog from Bos taurus (Bovine).